Consider the following 94-residue polypeptide: MFTINAEVRAVQGKGASRRLRAANKFPAIIYGGEAAPVAIEMDQDKVWNQQTKEGFYTEVLTIVIDGKEEKVKVQAVQRHPFKPKLSHVDFVRA.

Belongs to the bacterial ribosomal protein bL25 family. Part of the 50S ribosomal subunit; part of the 5S rRNA/L5/L18/L25 subcomplex. Contacts the 5S rRNA. Binds to the 5S rRNA independently of L5 and L18.

Its function is as follows. This is one of the proteins that binds to the 5S RNA in the ribosome where it forms part of the central protuberance. In Enterobacter sp. (strain 638), this protein is Large ribosomal subunit protein bL25.